Consider the following 288-residue polypeptide: Tryptophan 2,3-dioxygenase (288 aa).

Substrate is bound by residues Phe57–His61, Tyr119, and Arg123. Position 246 (His246) interacts with heme. A substrate-binding site is contributed by Thr260.

It belongs to the tryptophan 2,3-dioxygenase family. In terms of assembly, homotetramer. Heme is required as a cofactor.

It carries out the reaction L-tryptophan + O2 = N-formyl-L-kynurenine. It functions in the pathway amino-acid degradation; L-tryptophan degradation via kynurenine pathway; L-kynurenine from L-tryptophan: step 1/2. Functionally, heme-dependent dioxygenase that catalyzes the oxidative cleavage of the L-tryptophan (L-Trp) pyrrole ring and converts L-tryptophan to N-formyl-L-kynurenine. Catalyzes the oxidative cleavage of the indole moiety. In Pseudomonas aeruginosa (strain UCBPP-PA14), this protein is Tryptophan 2,3-dioxygenase.